The sequence spans 581 residues: Arginine--tRNA ligase (581 aa).

Residues 126–136 carry the 'HIGH' region motif; that stretch reads PNLAKEMHVGH.

This sequence belongs to the class-I aminoacyl-tRNA synthetase family. As to quaternary structure, monomer.

Its subcellular location is the cytoplasm. It carries out the reaction tRNA(Arg) + L-arginine + ATP = L-arginyl-tRNA(Arg) + AMP + diphosphate. In Shewanella sediminis (strain HAW-EB3), this protein is Arginine--tRNA ligase.